The chain runs to 313 residues: Dehydrodolichyl diphosphate synthase CPT5, chloroplastic (313 aa).

The N-terminal 42 residues, 1-42 (MAFSFQLQQVFPFPVKFCSQPKSIKLQIFPNLTKRLPIHPLA), are a transit peptide targeting the chloroplast. Aspartate 89 is a catalytic residue.

The protein belongs to the UPP synthase family. Mg(2+) serves as cofactor. Expressed in leaf trichomes, stem trichomes and old leaves. Expressed at low levels in young leaves and flowers.

It localises to the plastid. The protein resides in the chloroplast. It catalyses the reaction n isopentenyl diphosphate + (2E,6E)-farnesyl diphosphate = a di-trans,poly-cis-polyprenyl diphosphate + n diphosphate. In terms of biological role, catalyzes cis-prenyl chain elongation to produce the polyprenyl backbone of dolichol, a glycosyl carrier-lipid required for the biosynthesis of several classes of glycoprotein. This is Dehydrodolichyl diphosphate synthase CPT5, chloroplastic from Solanum lycopersicum (Tomato).